The primary structure comprises 154 residues: UPF0178 protein SSP2038 (154 aa).

The protein belongs to the UPF0178 family.

The polypeptide is UPF0178 protein SSP2038 (Staphylococcus saprophyticus subsp. saprophyticus (strain ATCC 15305 / DSM 20229 / NCIMB 8711 / NCTC 7292 / S-41)).